A 395-amino-acid chain; its full sequence is Beta-1,4-galactosyltransferase 3 (395 aa).

Residues M1 to C10 are Cytoplasmic-facing. A helical; Signal-anchor for type II membrane protein membrane pass occupies residues T11–F31. Residues R32 to H395 lie on the Lumenal side of the membrane. N-linked (GlcNAc...) asparagine glycosylation is present at N57. C79 and C121 are oxidised to a cystine. Residue P132 to R136 participates in UDP-alpha-D-galactose binding. N168 carries an N-linked (GlcNAc...) asparagine glycan. Residues F171–R173, V198–D199, Y228, and W260 contribute to the UDP-alpha-D-galactose site. C192 and C211 are oxidised to a cystine. Residue D199 coordinates Mn(2+). G262–D265 serves as a coordination point for N-acetyl-D-glucosamine. H293 provides a ligand contact to Mn(2+). H293–G295 is a UDP-alpha-D-galactose binding site. N-acetyl-D-glucosamine is bound at residue R305. An N-linked (GlcNAc...) asparagine glycan is attached at N339. The tract at residues I340–H395 is disordered. The span at R352 to S364 shows a compositional bias: low complexity. N-linked (GlcNAc...) asparagine glycosylation is present at N387.

This sequence belongs to the glycosyltransferase 7 family. Requires Mn(2+) as cofactor.

It is found in the golgi apparatus. It localises to the golgi stack membrane. The enzyme catalyses an N-acetyl-beta-D-glucosaminyl derivative + UDP-alpha-D-galactose = a beta-D-galactosyl-(1-&gt;4)-N-acetyl-beta-D-glucosaminyl derivative + UDP + H(+). The catalysed reaction is N-acetyl-D-glucosamine + UDP-alpha-D-galactose = beta-D-galactosyl-(1-&gt;4)-N-acetyl-D-glucosamine + UDP + H(+). It carries out the reaction a beta-D-GlcNAc-(1-&gt;3)-beta-D-Gal-(1-&gt;4)-beta-D-Glc-(1&lt;-&gt;1)-Cer(d18:1(4E)) + UDP-alpha-D-galactose = a neolactoside nLc4Cer(d18:1(4E)) + UDP + H(+). It catalyses the reaction a beta-D-glucosylceramide + UDP-alpha-D-galactose = a beta-D-galactosyl-(1-&gt;4)-beta-D-glucosyl-(1&lt;-&gt;1)-ceramide + UDP + H(+). The enzyme catalyses a neolactoside IV(3)-beta-GlcNAc-nLc4Cer + UDP-alpha-D-galactose = a neolactoside nLc6Cer + UDP + H(+). It participates in protein modification; protein glycosylation. In terms of biological role, responsible for the synthesis of complex-type N-linked oligosaccharides in many glycoproteins as well as the carbohydrate moieties of glycolipids. The chain is Beta-1,4-galactosyltransferase 3 from Mus musculus (Mouse).